We begin with the raw amino-acid sequence, 320 residues long: Cytochrome f (320 aa).

A signal peptide spans 1–35; the sequence is MQTRKTFSWIKEQITRSISASLMIYIITRTSISSA. Heme contacts are provided by Tyr-36, Cys-56, Cys-59, and His-60. The helical transmembrane segment at 286–306 threads the bilayer; it reads VQGLLFFLASVILAQIFLVLK.

The protein belongs to the cytochrome f family. In terms of assembly, the 4 large subunits of the cytochrome b6-f complex are cytochrome b6, subunit IV (17 kDa polypeptide, petD), cytochrome f and the Rieske protein, while the 4 small subunits are PetG, PetL, PetM and PetN. The complex functions as a dimer. The cofactor is heme.

The protein localises to the plastid. It is found in the chloroplast thylakoid membrane. In terms of biological role, component of the cytochrome b6-f complex, which mediates electron transfer between photosystem II (PSII) and photosystem I (PSI), cyclic electron flow around PSI, and state transitions. This Panax ginseng (Korean ginseng) protein is Cytochrome f.